The following is a 162-amino-acid chain: RNA pyrophosphohydrolase (162 aa).

The region spanning K7–E149 is the Nudix hydrolase domain. A Nudix box motif is present at residues G40–G61.

This sequence belongs to the Nudix hydrolase family. RppH subfamily. A divalent metal cation is required as a cofactor.

Accelerates the degradation of transcripts by removing pyrophosphate from the 5'-end of triphosphorylated RNA, leading to a more labile monophosphorylated state that can stimulate subsequent ribonuclease cleavage. The protein is RNA pyrophosphohydrolase of Wolbachia pipientis wMel.